A 255-amino-acid polypeptide reads, in one-letter code: Triosephosphate isomerase (255 aa).

A substrate-binding site is contributed by 9-11 (NWK). The Electrophile role is filled by His95. The active-site Proton acceptor is Glu167. Residues Gly173, Ser212, and 233 to 234 (GG) contribute to the substrate site.

It belongs to the triosephosphate isomerase family. As to quaternary structure, homodimer.

The protein resides in the cytoplasm. The catalysed reaction is D-glyceraldehyde 3-phosphate = dihydroxyacetone phosphate. It participates in carbohydrate biosynthesis; gluconeogenesis. Its pathway is carbohydrate degradation; glycolysis; D-glyceraldehyde 3-phosphate from glycerone phosphate: step 1/1. Functionally, involved in the gluconeogenesis. Catalyzes stereospecifically the conversion of dihydroxyacetone phosphate (DHAP) to D-glyceraldehyde-3-phosphate (G3P). The sequence is that of Triosephosphate isomerase from Erwinia tasmaniensis (strain DSM 17950 / CFBP 7177 / CIP 109463 / NCPPB 4357 / Et1/99).